Here is a 444-residue protein sequence, read N- to C-terminus: Acyl-CoA 6-desaturase (444 aa).

Residues 1-21 form a disordered region; it reads MGKGGNQGEGSTERQAPMPTF. Topologically, residues 1 to 130 are cytoplasmic; that stretch reads MGKGGNQGEG…EDMNLFKTNH (130 aa). A Cytochrome b5 heme-binding domain is found at 18 to 95; the sequence is MPTFRWEEIQ…LKPLLIGELA (78 aa). The chain crosses the membrane as a helical span at residues 131-151; it reads LFFFLLLSHIIVMESLAWFIL. Residue serine 152 is a topological domain, lumenal. The helical transmembrane segment at 153 to 173 threads the bilayer; it reads YFGTGWIPTLVTAFVLATSQA. The Cytoplasmic portion of the chain corresponds to 174 to 264; sequence QAGWLQHDYG…KYLPYNHQHE (91 aa). Positions 180–184 match the Histidine box-1 motif; it reads HDYGH. The Histidine box-2 signature appears at 217–221; it reads HFQHH. Residues 265–285 form a helical membrane-spanning segment; that stretch reads YFFLIGPPLLIPMYFQYQIIM. Residues 286 to 305 lie on the Lumenal side of the membrane; it reads TMISRRDWVDLAWAISYYMR. Residues 306 to 326 traverse the membrane as a helical segment; that stretch reads FFYTYIPFYGILGALVFLNFI. The Cytoplasmic segment spans residues 327–444; that stretch reads RFLESHWFVW…ELWLDAYLHK (118 aa). The short motif at 382-386 is the Histidine box-3 element; the sequence is QIEHH.

The protein belongs to the fatty acid desaturase type 1 family. In terms of tissue distribution, highly expressed in the adrenal gland, liver, brain, and testis, tissues where lipogenesis and steroidogenesis are active. Also detected in lung, heart, and skeletal muscle.

Its subcellular location is the endoplasmic reticulum membrane. The enzyme catalyses (9Z,12Z)-octadecadienoyl-CoA + 2 Fe(II)-[cytochrome b5] + O2 + 2 H(+) = (6Z,9Z,12Z)-octadecatrienoyl-CoA + 2 Fe(III)-[cytochrome b5] + 2 H2O. The catalysed reaction is (9Z,12Z,15Z)-octadecatrienoyl-CoA + 2 Fe(II)-[cytochrome b5] + O2 + 2 H(+) = (6Z,9Z,12Z,15Z)-octadecatetraenoyl-CoA + 2 Fe(III)-[cytochrome b5] + 2 H2O. It carries out the reaction (9Z,12Z,15Z,18Z,21Z)-tetracosapentaenoyl-CoA + 2 Fe(II)-[cytochrome b5] + O2 + 2 H(+) = (6Z,9Z,12Z,15Z,18Z,21Z)-tetracosahexaenoyl-CoA + 2 Fe(III)-[cytochrome b5] + 2 H2O. It catalyses the reaction (11E)-octadecenoyl-CoA + 2 Fe(II)-[cytochrome b5] + O2 + 2 H(+) = (6Z,11E)-octadecadienoyl-CoA + 2 Fe(III)-[cytochrome b5] + 2 H2O. The enzyme catalyses (11Z,14Z)-eicosadienoyl-CoA + 2 Fe(II)-[cytochrome b5] + O2 + 2 H(+) = (8Z,11Z,14Z)-eicosatrienoyl-CoA + 2 Fe(III)-[cytochrome b5] + 2 H2O. The catalysed reaction is (11Z,14Z,17Z)-eicosatrienoyl-CoA + 2 Fe(II)-[cytochrome b5] + O2 + 2 H(+) = (8Z,11Z,14Z,17Z)-eicosatetraenoyl-CoA + 2 Fe(III)-[cytochrome b5] + 2 H2O. The protein operates within lipid metabolism; polyunsaturated fatty acid biosynthesis. Involved in the biosynthesis of highly unsaturated fatty acids (HUFA) from the essential polyunsaturated fatty acids (PUFA) linoleic acid (LA) (18:2n-6) and alpha-linolenic acid (ALA) (18:3n-3) precursors, acting as a fatty acyl-coenzyme A (CoA) desaturase that introduces a cis double bond at carbon 6 of the fatty acyl chain. Catalyzes the first and rate limiting step in this pathway which is the desaturation of LA (18:2n-6) and ALA (18:3n-3) into gamma-linoleate (GLA) (18:3n-6) and stearidonate (18:4n-3), respectively. Subsequently, in the biosynthetic pathway of HUFA n-3 series, it desaturates tetracosapentaenoate (24:5n-3) to tetracosahexaenoate (24:6n-3), which is then converted to docosahexaenoate (DHA)(22:6n-3), an important lipid for nervous system function. It can also desaturate (11E)-octadecenoate (trans-vaccenoate) at carbon 6 generating (6Z,11E)-octadecadienoate. In addition to Delta-6 activity, this enzyme exhibits Delta-8 activity with slight biases toward n-3 fatty acyl-CoA substrates. The polypeptide is Acyl-CoA 6-desaturase (Mus musculus (Mouse)).